A 146-amino-acid chain; its full sequence is Flavodoxin (146 aa).

Residues 4 to 143 (SLIVYGSTTG…EIVSWGSGIA (140 aa)) enclose the Flavodoxin-like domain.

Belongs to the flavodoxin family. It depends on FMN as a cofactor.

Low-potential electron donor to a number of redox enzymes. The chain is Flavodoxin from Maridesulfovibrio salexigens (strain ATCC 14822 / DSM 2638 / NCIMB 8403 / VKM B-1763) (Desulfovibrio salexigens).